The following is a 227-amino-acid chain: Cytochrome c oxidase subunit 2 (227 aa).

Residues 1–14 are Mitochondrial intermembrane-facing; the sequence is MAYPFQLGLQDATS. A helical membrane pass occupies residues 15–45; sequence PIMEELTNFHDHTLMIVFLISSLVLYIISLM. The Mitochondrial matrix portion of the chain corresponds to 46–59; it reads LTTKLTHTSTMDAQ. A helical membrane pass occupies residues 60 to 87; sequence EVETIWTILPAVILILIALPSLRILYMM. The Mitochondrial intermembrane portion of the chain corresponds to 88–227; the sequence is DEINNPVLTV…YFENWSASMI (140 aa). Cu cation contacts are provided by H161, C196, E198, C200, H204, and M207. E198 contacts Mg(2+). Phosphotyrosine is present on Y218.

Belongs to the cytochrome c oxidase subunit 2 family. In terms of assembly, component of the cytochrome c oxidase (complex IV, CIV), a multisubunit enzyme composed of 14 subunits. The complex is composed of a catalytic core of 3 subunits MT-CO1, MT-CO2 and MT-CO3, encoded in the mitochondrial DNA, and 11 supernumerary subunits COX4I, COX5A, COX5B, COX6A, COX6B, COX6C, COX7A, COX7B, COX7C, COX8 and NDUFA4, which are encoded in the nuclear genome. The complex exists as a monomer or a dimer and forms supercomplexes (SCs) in the inner mitochondrial membrane with NADH-ubiquinone oxidoreductase (complex I, CI) and ubiquinol-cytochrome c oxidoreductase (cytochrome b-c1 complex, complex III, CIII), resulting in different assemblies (supercomplex SCI(1)III(2)IV(1) and megacomplex MCI(2)III(2)IV(2)). Found in a complex with TMEM177, COA6, COX18, COX20, SCO1 and SCO2. Interacts with TMEM177 in a COX20-dependent manner. Interacts with COX20. Interacts with COX16. Cu cation is required as a cofactor.

Its subcellular location is the mitochondrion inner membrane. It catalyses the reaction 4 Fe(II)-[cytochrome c] + O2 + 8 H(+)(in) = 4 Fe(III)-[cytochrome c] + 2 H2O + 4 H(+)(out). Its function is as follows. Component of the cytochrome c oxidase, the last enzyme in the mitochondrial electron transport chain which drives oxidative phosphorylation. The respiratory chain contains 3 multisubunit complexes succinate dehydrogenase (complex II, CII), ubiquinol-cytochrome c oxidoreductase (cytochrome b-c1 complex, complex III, CIII) and cytochrome c oxidase (complex IV, CIV), that cooperate to transfer electrons derived from NADH and succinate to molecular oxygen, creating an electrochemical gradient over the inner membrane that drives transmembrane transport and the ATP synthase. Cytochrome c oxidase is the component of the respiratory chain that catalyzes the reduction of oxygen to water. Electrons originating from reduced cytochrome c in the intermembrane space (IMS) are transferred via the dinuclear copper A center (CU(A)) of subunit 2 and heme A of subunit 1 to the active site in subunit 1, a binuclear center (BNC) formed by heme A3 and copper B (CU(B)). The BNC reduces molecular oxygen to 2 water molecules using 4 electrons from cytochrome c in the IMS and 4 protons from the mitochondrial matrix. The polypeptide is Cytochrome c oxidase subunit 2 (MT-CO2) (Dacnomys millardi (Millard's rat)).